We begin with the raw amino-acid sequence, 596 residues long: Probable lysosomal cobalamin transporter (596 aa).

The next 10 membrane-spanning stretches (helical) occupy residues 13–33, 45–65, 99–119, 150–170, 201–221, 318–338, 353–373, 381–401, 425–445, and 512–532; these read IWVA…ITTF, VSIV…LLPV, VVYY…IPFA, LGFV…PAAG, LLIT…LALL, LLGG…MLIT, GYIL…VQSA, ILMA…IATI, IATV…AMIV, and VFGA…MVVF. Asn543 is a glycosylation site (N-linked (GlcNAc...) asparagine). The disordered stretch occupies residues 576-596; that stretch reads GRAKNRNGYGTGGGEGSNGRG. Residues 584–596 show a composition bias toward gly residues; the sequence is YGTGGGEGSNGRG.

It belongs to the LIMR family. LMBRD1 subfamily.

The protein resides in the lysosome membrane. Probable lysosomal cobalamin transporter. Required to export cobalamin from lysosomes allowing its conversion to cofactors. In Podospora anserina (strain S / ATCC MYA-4624 / DSM 980 / FGSC 10383) (Pleurage anserina), this protein is Probable lysosomal cobalamin transporter.